The primary structure comprises 44 residues: MSYKCSRCKRDVELDEYGGVRCPYCGHRVLLKERSRDVKEVSVQ.

Zn(2+) is bound by residues Cys-8, Cys-22, and Cys-25.

This sequence belongs to the archaeal Rpo12/eukaryotic RPC10 RNA polymerase subunit family. Part of the RNA polymerase complex. The cofactor is Zn(2+).

It localises to the cytoplasm. The catalysed reaction is RNA(n) + a ribonucleoside 5'-triphosphate = RNA(n+1) + diphosphate. Functionally, DNA-dependent RNA polymerase (RNAP) catalyzes the transcription of DNA into RNA using the four ribonucleoside triphosphates as substrates. The polypeptide is DNA-directed RNA polymerase subunit Rpo12 (Halobacterium salinarum (strain ATCC 29341 / DSM 671 / R1)).